The following is a 345-amino-acid chain: Uroporphyrinogen decarboxylase (345 aa).

Substrate is bound by residues 28-32 (RQAGR), Asp77, Tyr152, Ser207, and His321.

Belongs to the uroporphyrinogen decarboxylase family. Homodimer.

The protein resides in the cytoplasm. It carries out the reaction uroporphyrinogen III + 4 H(+) = coproporphyrinogen III + 4 CO2. It participates in porphyrin-containing compound metabolism; protoporphyrin-IX biosynthesis; coproporphyrinogen-III from 5-aminolevulinate: step 4/4. Its function is as follows. Catalyzes the decarboxylation of four acetate groups of uroporphyrinogen-III to yield coproporphyrinogen-III. This chain is Uroporphyrinogen decarboxylase, found in Arthrobacter sp. (strain FB24).